A 245-amino-acid chain; its full sequence is MAPK-interacting and spindle-stabilizing protein-like (245 aa).

Residues 1-245 (MSDEFSLADA…PMPGGPHSYH (245 aa)) form a disordered region. Residue serine 2 is modified to N-acetylserine. 3 positions are modified to phosphoserine: serine 2, serine 6, and serine 15. Positions 17 to 26 (AKTSAVSNTK) are enriched in polar residues. Positions 34 to 51 (WPGSNPWNNPSAPSSVPS) are enriched in low complexity. Composition is skewed to pro residues over residues 74-127 (SVPP…PELP), 164-190 (PNMP…PPVP), and 198-207 (AWGPPAPYPA).

The protein belongs to the MISS family.

The chain is MAPK-interacting and spindle-stabilizing protein-like (MAPK1IP1L) from Homo sapiens (Human).